We begin with the raw amino-acid sequence, 40 residues long: Proteinase inhibitor IIB (40 aa).

Cystine bridges form between C2–C16, C6–C28, and C12–C38.

The protein belongs to the protease inhibitor I20 (potato type II proteinase inhibitor) family.

The protein resides in the secreted. Functionally, inhibits chymotrypsin and subtilisin strongly. The sequence is that of Proteinase inhibitor IIB from Solanum tuberosum (Potato).